A 1892-amino-acid polypeptide reads, in one-letter code: Alpha-2-macroglobulin (1892 aa).

The signal sequence occupies residues 1-23; it reads MKNIFRKFVFTIFVCLINLQLIA. The isoglutamyl cysteine thioester (Cys-Gln) cross-link spans 1441-1444; sequence CTEQ.

It belongs to the protease inhibitor I39 (alpha-2-macroglobulin) family. Bacterial alpha-2-macroglobulin subfamily.

Functionally, protects the bacterial cell from host peptidases. The chain is Alpha-2-macroglobulin from Rickettsia conorii (strain ATCC VR-613 / Malish 7).